A 445-amino-acid chain; its full sequence is Probable fructoselysine/psicoselysine transporter FrlA (445 aa).

Transmembrane regions (helical) follow at residues L10–V30, A38–P58, G93–V113, P121–L141, L155–F175, A181–I201, C236–F256, I273–L293, I334–L354, G355–C375, A389–V410, and L417–A435.

Belongs to the amino acid-polyamine-organocation (APC) superfamily.

Its subcellular location is the cell inner membrane. The enzyme catalyses N(6)-(D-fructosyl)-L-lysine(in) = N(6)-(D-fructosyl)-L-lysine(out). It carries out the reaction N(6)-(D-psicosyl)-L-lysine(in) = N(6)-(D-psicosyl)-L-lysine(out). It functions in the pathway carbohydrate metabolism; fructoselysine degradation. Is likely involved in the transport of fructoselysine and psicoselysine to the cytoplasm, where they are degraded. The polypeptide is Probable fructoselysine/psicoselysine transporter FrlA (Escherichia coli (strain K12)).